Reading from the N-terminus, the 219-residue chain is Dehydration-responsive element-binding protein 1F (219 aa).

The disordered stretch occupies residues 1-45 (MDTEDTSSASSSSVSPPSSPGGGHHHRLPPKRRAGRKKFRETRHP). The segment covering 7-16 (SSASSSSVSP) has biased composition (low complexity). Residues 23–41 (GHHHRLPPKRRAGRKKFRE) show a composition bias toward basic residues. A DNA-binding region (AP2/ERF) is located at residues 46–105 (VYRGVRARAGGSRWVCEVREPQAQARIWLGTYPTPEMAARAHDVAAIALRGERGAELNFP). Residues 134-161 (RRPPPPLALPEDPQEGTSGGGATATSGR) are disordered.

Belongs to the AP2/ERF transcription factor family. ERF subfamily. As to expression, mostly expressed in developing seeds and apices.

The protein localises to the nucleus. Its function is as follows. Transcriptional activator that binds specifically to the DNA sequence 5'-[AG]CCGAC-3'. Binding to the C-repeat/DRE element mediates high salinity- and dehydration-inducible transcription. The polypeptide is Dehydration-responsive element-binding protein 1F (DREB1F) (Oryza sativa subsp. indica (Rice)).